Consider the following 438-residue polypeptide: GRAS family protein TF80 (438 aa).

Positions 13-436 constitute a GRAS domain; that stretch reads LRYDSHGSNP…RPLFSVSAWK (424 aa). Positions 20–81 are leucine repeat I (LRI); the sequence is SNPMIPLIEC…YKIVKHLPGV (62 aa). The VHIID stretch occupies residues 100 to 165; that stretch reads QKYFYDLCPF…GGPPFLKITG (66 aa). The VHIID motif lies at 131 to 135; that stretch reads VHIID. The interval 175-207 is leucine repeat II (LRII); that stretch reads QMSFHLTTEAGILDFPLQFNPIISKLEDVDFEN. The interval 216–359 is PFYRE; that stretch reads VAISSVLQLH…SMLLGEQIKN (144 aa). The short motif at 224–228 is the LXXLL motif element; that stretch reads LHSLL. Positions 362–436 are SAW; that stretch reads TCEGVDRKER…RPLFSVSAWK (75 aa).

Belongs to the GRAS family. Interacts with RAM1.

Its subcellular location is the nucleus. This Medicago truncatula (Barrel medic) protein is GRAS family protein TF80 (TF80).